We begin with the raw amino-acid sequence, 215 residues long: Probable phosphoglycerate mutase GpmB (215 aa).

Residues 8-15, 21-22, R58, K60, 82-85, 104-105, and 151-152 each bind substrate; these read RHGETQWN, QG, ELDM, RR, and GI. The active-site Tele-phosphohistidine intermediate is the H9. E82 serves as the catalytic Proton donor/acceptor.

This sequence belongs to the phosphoglycerate mutase family. GpmB subfamily.

The catalysed reaction is (2R)-2-phosphoglycerate = (2R)-3-phosphoglycerate. It participates in carbohydrate degradation; glycolysis; pyruvate from D-glyceraldehyde 3-phosphate: step 3/5. The sequence is that of Probable phosphoglycerate mutase GpmB from Salmonella paratyphi C (strain RKS4594).